The chain runs to 108 residues: ATP-dependent Clp protease adapter protein ClpS (108 aa).

This sequence belongs to the ClpS family. As to quaternary structure, binds to the N-terminal domain of the chaperone ClpA.

Its function is as follows. Involved in the modulation of the specificity of the ClpAP-mediated ATP-dependent protein degradation. This chain is ATP-dependent Clp protease adapter protein ClpS, found in Ralstonia nicotianae (strain ATCC BAA-1114 / GMI1000) (Ralstonia solanacearum).